The following is a 325-amino-acid chain: Elongation factor P--(R)-beta-lysine ligase (325 aa).

Residue 76–78 (SPE) coordinates substrate. ATP is bound by residues 100 to 102 (RNE) and N109. Residue Y118 coordinates substrate. An ATP-binding site is contributed by 244–245 (EL). Residue E251 participates in substrate binding. G300 serves as a coordination point for ATP.

This sequence belongs to the class-II aminoacyl-tRNA synthetase family. EpmA subfamily. As to quaternary structure, homodimer.

It catalyses the reaction D-beta-lysine + L-lysyl-[protein] + ATP = N(6)-((3R)-3,6-diaminohexanoyl)-L-lysyl-[protein] + AMP + diphosphate + H(+). With EpmB is involved in the beta-lysylation step of the post-translational modification of translation elongation factor P (EF-P). Catalyzes the ATP-dependent activation of (R)-beta-lysine produced by EpmB, forming a lysyl-adenylate, from which the beta-lysyl moiety is then transferred to the epsilon-amino group of a conserved specific lysine residue in EF-P. The chain is Elongation factor P--(R)-beta-lysine ligase from Klebsiella pneumoniae (strain 342).